A 518-amino-acid chain; its full sequence is MGQSTSAAGNSILNRRRSKSFTLKFPIESIESEISQPDYTSSLPDECLALVFQFLNSGNRKRCALVCRRWMIVEGQNRYRLSLHARSDLITSIPSLFSRFDSVTKLSLKCDRRSVSIGDEALVKISLRCRNLKRLKLRACRELTDVGMAAFAENCKDLKIFSCGSCDFGAKGVKAVLDHCSNLEELSIKRLRGFTDIAPEMIGPGVAASSLKSICLKELYNGQCFGPVIVGAKNLKSLKLFRCSGDWDLLLQEMSGKDHGVVEIHLERMQVSDVALSAISYCSSLESLHLVKTPECTNFGLAAIAEKCKRLRKLHIDGWKANLIGDEGLVAVAKFCSQLQELVLIGVNPTTLSLGMLAAKCLNLERLALCGCDTFGDPELSCIAAKCPALRKLCIKNCPISDVGIENLANGCPGLTKVKIKKCKGVLGGCADWLRTVRPMLSVNADTMEQEHEEAASNDVVGGSQENGIEFPQLNSQIMASSIASSSRNRSGYFKSGIGLFSGMSLVPCTSRQRRASR.

Residues 37–82 (PDYTSSLPDECLALVFQFLNSGNRKRCALVCRRWMIVEGQNRYRLS) form the F-box domain.

The polypeptide is F-box protein At1g47056 (Arabidopsis thaliana (Mouse-ear cress)).